The sequence spans 396 residues: Elongation factor Tu (396 aa).

In terms of domain architecture, tr-type G spans K10–V205. Residues G19 to T26 are G1. G19–T26 is a GTP binding site. Mg(2+) is bound at residue T26. Positions G62 to N66 are G2. The tract at residues D83 to G86 is G3. GTP is bound by residues D83–H87 and N138–D141. The segment at N138–D141 is G4. Residues S175 to L177 form a G5 region.

The protein belongs to the TRAFAC class translation factor GTPase superfamily. Classic translation factor GTPase family. EF-Tu/EF-1A subfamily. Monomer.

The protein localises to the cytoplasm. It catalyses the reaction GTP + H2O = GDP + phosphate + H(+). GTP hydrolase that promotes the GTP-dependent binding of aminoacyl-tRNA to the A-site of ribosomes during protein biosynthesis. This chain is Elongation factor Tu, found in Mycolicibacterium gilvum (strain PYR-GCK) (Mycobacterium gilvum (strain PYR-GCK)).